The following is a 151-amino-acid chain: Putative transcriptional regulatory protein TK2151 (151 aa).

It belongs to the Tfx family.

Its function is as follows. Putative transcriptional regulator. The chain is Putative transcriptional regulatory protein TK2151 from Thermococcus kodakarensis (strain ATCC BAA-918 / JCM 12380 / KOD1) (Pyrococcus kodakaraensis (strain KOD1)).